We begin with the raw amino-acid sequence, 427 residues long: Histidine--tRNA ligase (427 aa).

The protein belongs to the class-II aminoacyl-tRNA synthetase family. As to quaternary structure, homodimer.

It is found in the cytoplasm. It carries out the reaction tRNA(His) + L-histidine + ATP = L-histidyl-tRNA(His) + AMP + diphosphate + H(+). In Lacticaseibacillus casei (strain BL23) (Lactobacillus casei), this protein is Histidine--tRNA ligase.